A 150-amino-acid chain; its full sequence is uncharacterized protein (150 aa).

The signal sequence occupies residues 1–23; sequence MYSILIACLVLLLCLIIYVGHRA.

The protein belongs to the asfivirus EP152R family.

It is found in the virion. This is an uncharacterized protein from African swine fever virus (isolate Warthog/Namibia/Wart80/1980) (ASFV).